A 699-amino-acid chain; its full sequence is Keratinocyte proline-rich protein (699 aa).

Ser436 carries the phosphoserine modification. Pro residues-rich tracts occupy residues 448-477 (PYPRPEPCPSPEPRPCPRPRPRPEPCPSPE) and 513-533 (DPCPSPEPRPRPCPEPCPSPE). Residues 448–533 (PYPRPEPCPS…PCPEPCPSPE (86 aa)) are disordered.

As to expression, expressed in the stratified squamous epithelial layers of the skin, esophagus and tongue.

Its subcellular location is the cytoplasm. This is Keratinocyte proline-rich protein (Kprp) from Rattus norvegicus (Rat).